Reading from the N-terminus, the 500-residue chain is Beta-glucosidase 2 (500 aa).

A signal peptide spans M1–G24. Residues Q44 and H144 each contribute to the a beta-D-glucoside site. The active-site Proton donor is E190. C209 and C218 are joined by a disulfide. N-linked (GlcNAc...) asparagine glycosylation occurs at N222. Residues Y334 and E403 each contribute to the a beta-D-glucoside site. E403 acts as the Nucleophile in catalysis. N-linked (GlcNAc...) asparagine glycosylation occurs at N410. Position 445 (W445) interacts with a beta-D-glucoside.

The protein belongs to the glycosyl hydrolase 1 family.

The catalysed reaction is Hydrolysis of terminal, non-reducing beta-D-glucosyl residues with release of beta-D-glucose.. This Oryza sativa subsp. japonica (Rice) protein is Beta-glucosidase 2 (BGLU2).